The primary structure comprises 365 residues: Bifunctional chorismate mutase/prephenate dehydratase (365 aa).

A Chorismate mutase domain is found at 1 to 96; sequence MSEADQLKAL…SCLALEQPLR (96 aa). The substrate site is built by R11, R28, K39, and E57. The Prephenate dehydratase domain occupies 97 to 272; sequence VAYLGPEGTF…NSTRFLIIGS (176 aa). An ACT domain is found at 284–361; the sequence is SIIVSMRNKP…VALKVLGSYP (78 aa).

Its subcellular location is the cytoplasm. It catalyses the reaction chorismate = prephenate. The enzyme catalyses prephenate + H(+) = 3-phenylpyruvate + CO2 + H2O. It participates in amino-acid biosynthesis; L-phenylalanine biosynthesis; phenylpyruvate from prephenate: step 1/1. The protein operates within metabolic intermediate biosynthesis; prephenate biosynthesis; prephenate from chorismate: step 1/1. Catalyzes the Claisen rearrangement of chorismate to prephenate and the decarboxylation/dehydration of prephenate to phenylpyruvate. The sequence is that of Bifunctional chorismate mutase/prephenate dehydratase from Stutzerimonas stutzeri (Pseudomonas stutzeri).